Here is a 311-residue protein sequence, read N- to C-terminus: Cytosolic Fe-S cluster assembly factor Nubp1 homolog (311 aa).

Positions 1-21 (MQAPPPEHCPGVESEEAGKGS) are disordered. Positions 9, 23, 26, and 32 each coordinate [4Fe-4S] cluster. 63 to 70 (GKGGVGKS) provides a ligand contact to ATP. Residues C240 and C243 each contribute to the [4Fe-4S] cluster site.

Belongs to the Mrp/NBP35 ATP-binding proteins family. NUBP1/NBP35 subfamily. Heterotetramer of 2 Nubp1 and 2 Nubp2 chains. It depends on [4Fe-4S] cluster as a cofactor.

It is found in the cytoplasm. Functionally, component of the cytosolic iron-sulfur (Fe/S) protein assembly (CIA) machinery. Required for maturation of extramitochondrial Fe-S proteins. The Nubp1-Nubp2 heterotetramer forms a Fe-S scaffold complex, mediating the de novo assembly of an Fe-S cluster and its transfer to target apoproteins. This is Cytosolic Fe-S cluster assembly factor Nubp1 homolog from Drosophila melanogaster (Fruit fly).